The following is a 389-amino-acid chain: Lipid-A-disaccharide synthase (389 aa).

The protein belongs to the LpxB family.

The catalysed reaction is a lipid X + a UDP-2-N,3-O-bis[(3R)-3-hydroxyacyl]-alpha-D-glucosamine = a lipid A disaccharide + UDP + H(+). It functions in the pathway bacterial outer membrane biogenesis; LPS lipid A biosynthesis. Functionally, condensation of UDP-2,3-diacylglucosamine and 2,3-diacylglucosamine-1-phosphate to form lipid A disaccharide, a precursor of lipid A, a phosphorylated glycolipid that anchors the lipopolysaccharide to the outer membrane of the cell. In Histophilus somni (strain 2336) (Haemophilus somnus), this protein is Lipid-A-disaccharide synthase.